Reading from the N-terminus, the 168-residue chain is 3-dehydroquinate dehydratase (168 aa).

Catalysis depends on Tyr-22, which acts as the Proton acceptor. Asn-76, His-82, and Asp-89 together coordinate substrate. The active-site Proton donor is His-102. Substrate is bound by residues 103-104 (LT) and Arg-113.

This sequence belongs to the type-II 3-dehydroquinase family. Homododecamer.

It catalyses the reaction 3-dehydroquinate = 3-dehydroshikimate + H2O. Its pathway is metabolic intermediate biosynthesis; chorismate biosynthesis; chorismate from D-erythrose 4-phosphate and phosphoenolpyruvate: step 3/7. Its function is as follows. Catalyzes a trans-dehydration via an enolate intermediate. The polypeptide is 3-dehydroquinate dehydratase (Helicobacter acinonychis (strain Sheeba)).